Reading from the N-terminus, the 349-residue chain is MSGWPHRHVLDLASFSREDFAAVLELAQRFRSLPITGARKLPALQGRLVATLFFEPSTRTRSSFELAAKRLSADVMSFSPSSSSLSKGESVLDTARTYVAMGADVLVVRHRSTGVPQQLAHDLQQMGERTVVLNGGDGLHSHPSQGLLDLLTLARFFSPRHPMPEALQGRRIVIVGDILHSRVARSNLWALSACGADVVLCGPPSLVPDDFAAFVDAPPPGLPEDPVPQRGKVSVVRRLEHALPGADAVMTLRLQKERMGQQLLTSLERYHRDFGLSHERMQLCGQNVPVLHPGPVNRGVELSGSLLDDPRCSLVEEQVRNGVPTRMALLYLMAASESAAEASLVSSSS.

The carbamoyl phosphate site is built by R59 and T60. K87 is a binding site for L-aspartate. Residues R109, H142, and Q145 each coordinate carbamoyl phosphate. 2 residues coordinate L-aspartate: R182 and R253. Residues G294 and P295 each contribute to the carbamoyl phosphate site.

This sequence belongs to the aspartate/ornithine carbamoyltransferase superfamily. ATCase family. Heterododecamer (2C3:3R2) of six catalytic PyrB chains organized as two trimers (C3), and six regulatory PyrI chains organized as three dimers (R2).

The catalysed reaction is carbamoyl phosphate + L-aspartate = N-carbamoyl-L-aspartate + phosphate + H(+). The protein operates within pyrimidine metabolism; UMP biosynthesis via de novo pathway; (S)-dihydroorotate from bicarbonate: step 2/3. In terms of biological role, catalyzes the condensation of carbamoyl phosphate and aspartate to form carbamoyl aspartate and inorganic phosphate, the committed step in the de novo pyrimidine nucleotide biosynthesis pathway. The chain is Aspartate carbamoyltransferase catalytic subunit from Synechococcus sp. (strain CC9605).